The sequence spans 201 residues: ATP-dependent Clp protease proteolytic subunit 1 (201 aa).

Catalysis depends on Ser-102, which acts as the Nucleophile. His-127 is an active-site residue.

This sequence belongs to the peptidase S14 family. In terms of assembly, fourteen ClpP subunits assemble into 2 heptameric rings which stack back to back to give a disk-like structure with a central cavity, resembling the structure of eukaryotic proteasomes.

The protein localises to the cytoplasm. The enzyme catalyses Hydrolysis of proteins to small peptides in the presence of ATP and magnesium. alpha-casein is the usual test substrate. In the absence of ATP, only oligopeptides shorter than five residues are hydrolyzed (such as succinyl-Leu-Tyr-|-NHMec, and Leu-Tyr-Leu-|-Tyr-Trp, in which cleavage of the -Tyr-|-Leu- and -Tyr-|-Trp bonds also occurs).. In terms of biological role, cleaves peptides in various proteins in a process that requires ATP hydrolysis. Has a chymotrypsin-like activity. Plays a major role in the degradation of misfolded proteins. The chain is ATP-dependent Clp protease proteolytic subunit 1 from Mesorhizobium japonicum (strain LMG 29417 / CECT 9101 / MAFF 303099) (Mesorhizobium loti (strain MAFF 303099)).